We begin with the raw amino-acid sequence, 125 residues long: MIYGIGTDIVSLKRIIRLNKKFGQAFAGRILTPEELLEFPQAGKPVNYLAKRFAAKEAFAKAVGTGIRGAVSFRNIGIGHDALGKPEFFYGPALSKWLEEQGISRVSLSMSDEEDTVLAFVVAEK.

Positions 8 and 57 each coordinate Mg(2+).

The protein belongs to the P-Pant transferase superfamily. AcpS family. Mg(2+) is required as a cofactor.

Its subcellular location is the cytoplasm. It carries out the reaction apo-[ACP] + CoA = holo-[ACP] + adenosine 3',5'-bisphosphate + H(+). Functionally, transfers the 4'-phosphopantetheine moiety from coenzyme A to a Ser of acyl-carrier-protein. The protein is Holo-[acyl-carrier-protein] synthase of Neisseria meningitidis serogroup C (strain 053442).